Consider the following 339-residue polypeptide: DNA-directed RNA polymerase subunit alpha (339 aa).

The segment at Met-1–Glu-235 is alpha N-terminal domain (alpha-NTD). The interval Phe-251–Tyr-339 is alpha C-terminal domain (alpha-CTD).

The protein belongs to the RNA polymerase alpha chain family. In terms of assembly, homodimer. The RNAP catalytic core consists of 2 alpha, 1 beta, 1 beta' and 1 omega subunit. When a sigma factor is associated with the core the holoenzyme is formed, which can initiate transcription.

The catalysed reaction is RNA(n) + a ribonucleoside 5'-triphosphate = RNA(n+1) + diphosphate. In terms of biological role, DNA-dependent RNA polymerase catalyzes the transcription of DNA into RNA using the four ribonucleoside triphosphates as substrates. The sequence is that of DNA-directed RNA polymerase subunit alpha from Methylorubrum populi (strain ATCC BAA-705 / NCIMB 13946 / BJ001) (Methylobacterium populi).